Reading from the N-terminus, the 494-residue chain is MQKKYVVALDQGTTSSRAIVFDHDANIVSVSQREFTQLYPNPGWVEHDPMEIWASQSSVLIEVLARAGIHSDEVAAIGITNQRETTVIWEKATGKPIYNAIVWQCRRSSEICEQLKAQGLEEYVRENTGLLLDPYFSGTKIKWILDNVPNARAQAERGELLFGTIDTWLVWKLTEGKVHVTDPTNAARTLLFNIHSLTWDNKLLEALNIPLSLLPEVKPSCSVYGTTRIAGEGSEIQVAGMAGDQQAALFGQLCVEPGMAKNTYGTGCFLLMNTGTKAVRSNHGLLTTVAVGPKGEVNYALEGSVFMGGATIQWLRDELGLIRDASDTEYFASKVADTNGVYLVPAFVGLGAPYWDPNARGAIFGLTRGANRNHIIRAALESIAYQSKDLLDAMTKDSGVSLKRLKVDGGAVANDFLMQFQADITDVEVLRPSVCETTALGAAFLAGLAVGFWESVIELEHKACIDKHFIPNIDAETRVRLYAGWQDAVARTRA.

Threonine 13 is a binding site for ADP. The ATP site is built by threonine 13, threonine 14, and serine 15. Position 13 (threonine 13) interacts with sn-glycerol 3-phosphate. Arginine 17 contacts ADP. Positions 83, 84, 135, and 244 each coordinate sn-glycerol 3-phosphate. The glycerol site is built by arginine 83, glutamate 84, tyrosine 135, aspartate 244, and glutamine 245. The ADP site is built by threonine 266 and glycine 309. ATP contacts are provided by threonine 266, glycine 309, glutamine 313, and glycine 410. ADP is bound by residues glycine 410 and asparagine 414.

It belongs to the FGGY kinase family.

The catalysed reaction is glycerol + ATP = sn-glycerol 3-phosphate + ADP + H(+). Its pathway is polyol metabolism; glycerol degradation via glycerol kinase pathway; sn-glycerol 3-phosphate from glycerol: step 1/1. Its activity is regulated as follows. Inhibited by fructose 1,6-bisphosphate (FBP). Functionally, key enzyme in the regulation of glycerol uptake and metabolism. Catalyzes the phosphorylation of glycerol to yield sn-glycerol 3-phosphate. The sequence is that of Glycerol kinase from Shewanella baltica (strain OS195).